Reading from the N-terminus, the 334-residue chain is MDLVRFGIIGTAAIAVEKVIPSMLSAEGLEVVAIASRDLDRARAAATRFGIGRSYGSYDEILADPEIEAVYIPLPNHLHVHWAIRAAEAGKHVLCEKPLALDVEELSRLIDCRDRTGRRIQEAVMIRAHPQWDEIFDIVASGEIGEVRAIQGVFTEVNLDPKSIVNDASIGGGALYDLGVYPIAAARMVFAAEPERVFAVSDLDPVFGIDRLTSAVLLFPGGRQATLVVSTQLALRHNVEIFGTRKSISLKNPFNPTPDDHCRIVLDNGSKLAAAAAETRRVAPADQYRLQAERFSAAIRSGSPLPIELEWSLGTMKVLNAIQRSAERGNWETV.

The protein belongs to the Gfo/Idh/MocA family.

This is an uncharacterized protein from Rhizobium meliloti (Ensifer meliloti).